A 112-amino-acid chain; its full sequence is Integration host factor subunit alpha (112 aa).

The protein belongs to the bacterial histone-like protein family. Heterodimer of an alpha and a beta chain.

Its function is as follows. This protein is one of the two subunits of integration host factor, a specific DNA-binding protein that functions in genetic recombination as well as in transcriptional and translational control. In Rhizobium etli (strain ATCC 51251 / DSM 11541 / JCM 21823 / NBRC 15573 / CFN 42), this protein is Integration host factor subunit alpha.